The primary structure comprises 314 residues: Methionyl-tRNA formyltransferase (314 aa).

Residue 112–115 (SLLP) coordinates (6S)-5,6,7,8-tetrahydrofolate.

It belongs to the Fmt family.

It carries out the reaction L-methionyl-tRNA(fMet) + (6R)-10-formyltetrahydrofolate = N-formyl-L-methionyl-tRNA(fMet) + (6S)-5,6,7,8-tetrahydrofolate + H(+). Functionally, attaches a formyl group to the free amino group of methionyl-tRNA(fMet). The formyl group appears to play a dual role in the initiator identity of N-formylmethionyl-tRNA by promoting its recognition by IF2 and preventing the misappropriation of this tRNA by the elongation apparatus. The polypeptide is Methionyl-tRNA formyltransferase (Legionella pneumophila subsp. pneumophila (strain Philadelphia 1 / ATCC 33152 / DSM 7513)).